The primary structure comprises 456 residues: Bifunctional protein GlmU (456 aa).

The segment at 1–229 is pyrophosphorylase; that stretch reads MLNNAMSVVI…LSEVEGVNNR (229 aa). UDP-N-acetyl-alpha-D-glucosamine-binding positions include 11–14, lysine 25, glutamine 76, 81–82, 103–105, glycine 140, glutamate 154, asparagine 169, and asparagine 227; these read LAAG, GT, and YGD. Aspartate 105 contributes to the Mg(2+) binding site. Asparagine 227 is a binding site for Mg(2+). The interval 230–250 is linker; sequence LQLSRLERVYQSEQAEKLLLA. Residues 251–456 form an N-acetyltransferase region; sequence GVMLRDPARF…EGWRRPVKKK (206 aa). UDP-N-acetyl-alpha-D-glucosamine contacts are provided by arginine 333 and lysine 351. The Proton acceptor role is filled by histidine 363. Positions 366 and 377 each coordinate UDP-N-acetyl-alpha-D-glucosamine. Residues alanine 380, 386 to 387, serine 405, alanine 423, and arginine 440 each bind acetyl-CoA; that span reads NY.

In the N-terminal section; belongs to the N-acetylglucosamine-1-phosphate uridyltransferase family. It in the C-terminal section; belongs to the transferase hexapeptide repeat family. Homotrimer. It depends on Mg(2+) as a cofactor.

The protein localises to the cytoplasm. The catalysed reaction is alpha-D-glucosamine 1-phosphate + acetyl-CoA = N-acetyl-alpha-D-glucosamine 1-phosphate + CoA + H(+). It carries out the reaction N-acetyl-alpha-D-glucosamine 1-phosphate + UTP + H(+) = UDP-N-acetyl-alpha-D-glucosamine + diphosphate. It functions in the pathway nucleotide-sugar biosynthesis; UDP-N-acetyl-alpha-D-glucosamine biosynthesis; N-acetyl-alpha-D-glucosamine 1-phosphate from alpha-D-glucosamine 6-phosphate (route II): step 2/2. Its pathway is nucleotide-sugar biosynthesis; UDP-N-acetyl-alpha-D-glucosamine biosynthesis; UDP-N-acetyl-alpha-D-glucosamine from N-acetyl-alpha-D-glucosamine 1-phosphate: step 1/1. The protein operates within bacterial outer membrane biogenesis; LPS lipid A biosynthesis. Catalyzes the last two sequential reactions in the de novo biosynthetic pathway for UDP-N-acetylglucosamine (UDP-GlcNAc). The C-terminal domain catalyzes the transfer of acetyl group from acetyl coenzyme A to glucosamine-1-phosphate (GlcN-1-P) to produce N-acetylglucosamine-1-phosphate (GlcNAc-1-P), which is converted into UDP-GlcNAc by the transfer of uridine 5-monophosphate (from uridine 5-triphosphate), a reaction catalyzed by the N-terminal domain. In Escherichia fergusonii (strain ATCC 35469 / DSM 13698 / CCUG 18766 / IAM 14443 / JCM 21226 / LMG 7866 / NBRC 102419 / NCTC 12128 / CDC 0568-73), this protein is Bifunctional protein GlmU.